We begin with the raw amino-acid sequence, 1332 residues long: Elongator complex protein 1 (1332 aa).

5 positions are modified to phosphoserine: S471, S804, S867, S1171, and S1174. A mediates dimerization region spans residues 885–1332 (VDVNELYDHS…RTQWKLSLLD (448 aa)). The tract at residues 1150 to 1208 (QAGLDDEVPHGQESDLFSETSSVVSGSEMSGKYSHSNSRISARSSKNRRKAERKKHSLK) is disordered. Polar residues predominate over residues 1164–1177 (DLFSETSSVVSGSE). The segment at 1191–1209 (ARSSKNRRKAERKKHSLKE) is required for binding to tRNA. Residues 1194 to 1206 (SKNRRKAERKKHS) show a composition bias toward basic residues.

It belongs to the ELP1/IKA1 family. Homodimer; dimerization promotes ELP1 stability and elongator complex formation. Component of the elongator complex which consists of ELP1, ELP2, ELP3, ELP4, ELP5 and ELP6. Interacts preferentially with MAP3K14/NIK followed by IKK-alpha and IKK-beta.

It is found in the cytoplasm. The protein resides in the nucleus. It participates in tRNA modification; 5-methoxycarbonylmethyl-2-thiouridine-tRNA biosynthesis. In terms of biological role, component of the elongator complex which is required for multiple tRNA modifications, including mcm5U (5-methoxycarbonylmethyl uridine), mcm5s2U (5-methoxycarbonylmethyl-2-thiouridine), and ncm5U (5-carbamoylmethyl uridine). The elongator complex catalyzes the formation of carboxymethyluridine in the wobble base at position 34 in tRNAs. Regulates the migration and branching of projection neurons in the developing cerebral cortex, through a process depending on alpha-tubulin acetylation. ELP1 binds to tRNA, mediating interaction of the elongator complex with tRNA. May act as a scaffold protein that assembles active IKK-MAP3K14 complexes (IKKA, IKKB and MAP3K14/NIK). This chain is Elongator complex protein 1, found in Homo sapiens (Human).